The following is an 85-amino-acid chain: Large ribosomal subunit protein bL27 (85 aa).

This sequence belongs to the bacterial ribosomal protein bL27 family.

The sequence is that of Large ribosomal subunit protein bL27 from Leptospira biflexa serovar Patoc (strain Patoc 1 / Ames).